The primary structure comprises 348 residues: Putative methylthioribose-1-phosphate isomerase (348 aa).

Residues 55-57, arginine 98, and glutamine 203 contribute to the substrate site; that span reads RGA. The active-site Proton donor is the aspartate 244. 253–254 is a binding site for substrate; that stretch reads NK.

This sequence belongs to the eIF-2B alpha/beta/delta subunits family. MtnA subfamily.

The catalysed reaction is 5-(methylsulfanyl)-alpha-D-ribose 1-phosphate = 5-(methylsulfanyl)-D-ribulose 1-phosphate. Catalyzes the interconversion of methylthioribose-1-phosphate (MTR-1-P) into methylthioribulose-1-phosphate (MTRu-1-P). This is Putative methylthioribose-1-phosphate isomerase from Methanosarcina acetivorans (strain ATCC 35395 / DSM 2834 / JCM 12185 / C2A).